The primary structure comprises 263 residues: MSEEKRKQHFVLVHGSCHGAWCWYKVKPLLEAVGHRVTAVDLAASGIDTTRSITDIPTCEQYSEPLTKLLTSLPNDEKVVLVGHSFGGLNLAIAMEKFPEKISVAVFLTAFMPDTEHSPSFVLDKFGSNMPQEAWMGTEFEPYGSDNSGLSMFFSPDFMKLGLYQLSPVEDLELGLLLMRPGSLFINDLSKMKNFSDEGYGSVPRVFIVCKEDKAIPEERQRWMIDNFPVNLVMEMEETDHMPMFCKPQQLSDYFLKIADKFV.

Ser-85 functions as the Acyl-ester intermediate in the catalytic mechanism. Catalysis depends on charge relay system residues Asp-213 and His-241.

It belongs to the AB hydrolase superfamily. Methylesterase family.

It carries out the reaction methyl (indol-3-yl)acetate + H2O = (indol-3-yl)acetate + methanol + H(+). The enzyme catalyses methyl (-)-jasmonate + H2O = jasmonate + methanol + H(+). The catalysed reaction is methyl salicylate + H2O = salicylate + methanol + H(+). The protein operates within plant hormone biosynthesis. Its pathway is lipid metabolism; oxylipin biosynthesis. Esterase activity is down-regulated by salicylic acid (SA). Functionally, methylesterase shown to have carboxylesterase activity, methyl indole-3-acetic acid (MeIAA) esterase activity, methyl salicylate (MeSA) esterase activity and methyl jasmonate (MeJA) esterase activity in vitro. Required to convert methyl salicylate (MeSA) to salicylic acid (SA) as part of the signal transduction pathways that activate systemic acquired resistance in systemic tissue. MeSA is believed to be an inactive form that needs to be demethylated to exert a biological effect. The polypeptide is Methylesterase 1 (Arabidopsis thaliana (Mouse-ear cress)).